Here is a 468-residue protein sequence, read N- to C-terminus: Efflux pump azaK (468 aa).

Positions 1–30 are disordered; sequence MTVHPPAVADETSPLLPSQDGPGHNGIVPA. A run of 6 helical transmembrane segments spans residues 43–65, 80–100, 112–132, 135–155, 174–194, and 207–227; these read QVAL…FPFV, VGFY…MLMI, KPVL…FGFS, LGQM…VVTV, YFSL…GALC, and LPTV…LMFV. N-linked (GlcNAc...) asparagine glycosylation is present at asparagine 228. Helical transmembrane passes span 257 to 277, 296 to 316, 329 to 349, 357 to 377, 387 to 407, and 429 to 449; these read VLPV…YTAV, FYIS…LVLV, ILRG…GASV, VAFW…AMQL, VSPS…IISF, and PGFY…AFTL.

It belongs to the major facilitator superfamily.

Its subcellular location is the cell membrane. In terms of biological role, efflux pump that might be required for efficient secretion of azaphilones. In Aspergillus niger (strain ATCC 1015 / CBS 113.46 / FGSC A1144 / LSHB Ac4 / NCTC 3858a / NRRL 328 / USDA 3528.7), this protein is Efflux pump azaK.